A 177-amino-acid chain; its full sequence is NADH-quinone oxidoreductase subunit B (177 aa).

C56, C57, C121, and C151 together coordinate [4Fe-4S] cluster.

The protein belongs to the complex I 20 kDa subunit family. NDH-1 is composed of 14 different subunits. Subunits NuoB, C, D, E, F, and G constitute the peripheral sector of the complex. [4Fe-4S] cluster is required as a cofactor.

The protein localises to the cell inner membrane. It carries out the reaction a quinone + NADH + 5 H(+)(in) = a quinol + NAD(+) + 4 H(+)(out). Its function is as follows. NDH-1 shuttles electrons from NADH, via FMN and iron-sulfur (Fe-S) centers, to quinones in the respiratory chain. The immediate electron acceptor for the enzyme in this species is believed to be ubiquinone. Couples the redox reaction to proton translocation (for every two electrons transferred, four hydrogen ions are translocated across the cytoplasmic membrane), and thus conserves the redox energy in a proton gradient. This chain is NADH-quinone oxidoreductase subunit B, found in Rhodobacter capsulatus (Rhodopseudomonas capsulata).